The primary structure comprises 248 residues: Small ribosomal subunit protein uS3 (248 aa).

In terms of domain architecture, KH type-2 spans 38-106; it reads IREFLSEGLE…QVQLNILEVK (69 aa). Basic and acidic residues predominate over residues 214 to 229; it reads SLMNARDERPSRGGRR. The tract at residues 214 to 248 is disordered; the sequence is SLMNARDERPSRGGRRERPRRGGARRQRAEKKQEG. Basic residues predominate over residues 230 to 242; that stretch reads ERPRRGGARRQRA.

This sequence belongs to the universal ribosomal protein uS3 family. As to quaternary structure, part of the 30S ribosomal subunit. Forms a tight complex with proteins S10 and S14.

In terms of biological role, binds the lower part of the 30S subunit head. Binds mRNA in the 70S ribosome, positioning it for translation. This Corynebacterium urealyticum (strain ATCC 43042 / DSM 7109) protein is Small ribosomal subunit protein uS3.